The primary structure comprises 467 residues: Transcriptional regulator of yeast form adherence 6 (467 aa).

Positions 43-52 (NTSDAGSIPT) are enriched in polar residues. Disordered stretches follow at residues 43–83 (NTSD…NIDS), 128–149 (GSSGGSATPTSSTKKASTNSNN), 245–275 (ESPETIIEENEPVSETSSTNNTTTLHYSNSS), 312–365 (NNQL…SGSK), and 390–439 (STLN…DNDR). The 82-residue stretch at 92–173 (ETKQLHSIIE…KSSVEYILYL (82 aa)) folds into the bHLH domain. 2 stretches are compositionally biased toward low complexity: residues 257–275 (VSETSSTNNTTTLHYSNSS) and 312–322 (NNQLNNRKNSN). Positions 323–338 (PISPQTVCIKSQNPSP) are enriched in polar residues. The segment covering 345-365 (SSLSTSIVNSPSSSSSLSGSK) has biased composition (low complexity). A compositionally biased stretch (polar residues) spans 417 to 432 (GSANTETVNSGSASSD).

The protein localises to the nucleus. Transcription factor required for yeast cell adherence to silicone substrate. The polypeptide is Transcriptional regulator of yeast form adherence 6 (TRY6) (Candida albicans (strain SC5314 / ATCC MYA-2876) (Yeast)).